A 154-amino-acid polypeptide reads, in one-letter code: Jupiter microtubule associated homolog 1 (154 aa).

Methionine 1 bears the N-acetylmethionine mark. Polar residues predominate over residues 1–19 (MTTTTTFKGVDPNSRNSSR). The segment at 1–154 (MTTTTTFKGV…PGGKSSLVLG (154 aa)) is disordered. N-acetylthreonine; in Hematological and neurological expressed 1 protein, N-terminally processed is present on threonine 2. A phosphoserine mark is found at serine 28 and serine 31. Threonine 54 is modified (phosphothreonine). A phosphoserine mark is found at serine 71, serine 80, serine 87, serine 88, and serine 92. A compositionally biased stretch (polar residues) spans 80–91 (SGPQRRNSSEAN). Over residues 96 to 108 (LDLKGEGDVHENV) the composition is skewed to basic and acidic residues. A compositionally biased stretch (pro residues) spans 125–138 (PAAPVPSPVAPAPV). Serine 131 is modified (phosphoserine). N6-acetyllysine is present on lysine 148.

It belongs to the JUPITER family. In terms of assembly, interacts with the complex composed, at least, of APC, CTNNB1 and GSK3B; the interaction takes place with the inactive form of GSK3B (phosphorylated at 'Ser-9').

It localises to the nucleus. The protein resides in the cytoplasm. Its function is as follows. Modulates negatively AKT-mediated GSK3B signaling. Induces CTNNB1 'Ser-33' phosphorylation and degradation through the suppression of the inhibitory 'Ser-9' phosphorylation of GSK3B, which represses the function of the APC:CTNNB1:GSK3B complex and the interaction with CDH1/E-cadherin in adherent junctions. Plays a role in the regulation of cell cycle and cell adhesion. Has an inhibitory role on AR-signaling pathway through the induction of receptor proteasomal degradation. In Bos taurus (Bovine), this protein is Jupiter microtubule associated homolog 1.